The sequence spans 87 residues: Large ribosomal subunit protein bL27 (87 aa).

The disordered stretch occupies residues 1–21 (MAHKKAGGSSRNGRDSESKRL).

Belongs to the bacterial ribosomal protein bL27 family.

The protein is Large ribosomal subunit protein bL27 of Aromatoleum aromaticum (strain DSM 19018 / LMG 30748 / EbN1) (Azoarcus sp. (strain EbN1)).